The chain runs to 279 residues: Methyltransferase ausD (279 aa).

Residues 124-125, 152-153, and arginine 244 each bind S-adenosyl-L-methionine; these read DL and DI.

This sequence belongs to the class I-like SAM-binding methyltransferase superfamily. In terms of assembly, homodimer.

It functions in the pathway secondary metabolite biosynthesis; terpenoid biosynthesis. In terms of biological role, methyltransferase; part of the gene cluster that mediates the biosynthesis of calidodehydroaustin, a fungal meroterpenoid. The first step of the pathway is the synthesis of 3,5-dimethylorsellinic acid by the polyketide synthase ausA. 3,5-dimethylorsellinic acid is then prenylated by the polyprenyl transferase ausN. Further epoxidation by the FAD-dependent monooxygenase ausM and cyclization by the probable terpene cyclase ausL lead to the formation of protoaustinoid A. Protoaustinoid A is then oxidized to spiro-lactone preaustinoid A3 by the combined action of the FAD-binding monooxygenases ausB and ausC, and the dioxygenase ausE. Acid-catalyzed keto-rearrangement and ring contraction of the tetraketide portion of preaustinoid A3 by ausJ lead to the formation of preaustinoid A4. The aldo-keto reductase ausK, with the help of ausH, is involved in the next step by transforming preaustinoid A4 into isoaustinone which is in turn hydroxylated by the P450 monooxygenase ausI to form austinolide. The cytochrome P450 monooxygenase ausG modifies austinolide to austinol. Austinol is further acetylated to austin by the O-acetyltransferase ausP, which spontaneously changes to dehydroaustin. The cytochrome P450 monooxygenase ausR then converts dehydroaustin is into 7-dehydrodehydroaustin. The hydroxylation catalyzed by ausR permits the O-acetyltransferase ausQ to add an additional acetyl group to the molecule, leading to the formation of acetoxydehydroaustin. The short chain dehydrogenase ausT catalyzes the reduction of the double bond present between carbon atoms 1 and 2 to convert 7-dehydrodehydroaustin into 1,2-dihydro-7-hydroxydehydroaustin. AusQ catalyzes not only an acetylation reaction but also the addition of the PKS ausV diketide product to 1,2-dihydro-7-hydroxydehydroaustin, forming precalidodehydroaustin. Finally, the iron/alpha-ketoglutarate-dependent dioxygenase converts precalidodehydroaustin into calidodehydroaustin. This is Methyltransferase ausD from Aspergillus calidoustus.